The sequence spans 919 residues: Phosphoenolpyruvate carboxylase (919 aa).

Catalysis depends on residues His-138 and Lys-579.

Belongs to the PEPCase type 1 family. It depends on Mg(2+) as a cofactor.

The enzyme catalyses oxaloacetate + phosphate = phosphoenolpyruvate + hydrogencarbonate. Its activity is regulated as follows. Activity not stimulated by acetyl-CoA in the absence of any allosteric inhibitor, while the corresponding protein from E.coli is strongly stimulated. Forms oxaloacetate, a four-carbon dicarboxylic acid source for the tricarboxylic acid cycle. The protein is Phosphoenolpyruvate carboxylase (ppc) of Corynebacterium glutamicum (strain ATCC 13032 / DSM 20300 / JCM 1318 / BCRC 11384 / CCUG 27702 / LMG 3730 / NBRC 12168 / NCIMB 10025 / NRRL B-2784 / 534).